The primary structure comprises 685 residues: Augmin complex subunit dgt5 (685 aa).

Coiled-coil stretches lie at residues L87–Q165 and N342–L379.

Component of the augmin complex composed of dgt2, dgt3, dgt4, dgt5, dgt6, msd1, msd5 and wac. The complex interacts directly or indirectly with microtubules and is required for centrosome-independent generation of spindle microtubules.

Its subcellular location is the cytoplasm. The protein localises to the cytoskeleton. The protein resides in the spindle. It localises to the chromosome. It is found in the centromere. Its subcellular location is the kinetochore. The protein localises to the microtubule organizing center. The protein resides in the centrosome. As part of the augmin complex, plays a role in centrosome-independent generation of spindle microtubules. The complex is required for mitotic spindle assembly through its involvement in localizing gamma-tubulin to spindle microtubules. This chain is Augmin complex subunit dgt5, found in Drosophila melanogaster (Fruit fly).